The sequence spans 204 residues: MISEYVDEEIKRREDYSLRRLKGIPNDRRLWILTCMDERVHVEEALGIRPEDAHIYRNAGGIVTDDAIRSASLTTNFFGTKEIIVITHTDCGMIRFTGDEVAKYFLDKGVKVNELQIDPLLPSLRLQSTEDFTKWFKFFRDLGANSPDDIALKNAEILKNHPLIPKNVTISAYVYEVETHKLRKPHQRLYELTSRFEHGTVVKE.

Zn(2+) is bound by residues cysteine 35, histidine 88, and cysteine 91.

The protein belongs to the beta-class carbonic anhydrase family. As to quaternary structure, forms a hexadecameric catenane homooligomer, through interactions of two interlocked octameric rings. It depends on Zn(2+) as a cofactor.

The enzyme catalyses carbon disulfide + 2 H2O = 2 hydrogen sulfide + CO2 + 2 H(+). It functions in the pathway sulfur metabolism; hydrogen sulfide biosynthesis. Its function is as follows. Catalyzes the conversion of carbon disulfide into hydrogen sulfide and carbon dioxide, with carbonyl sulfide as an intermediate. Likely plays a key role in sulfur metabolism in S.solfataricus. Does not show carbonic anhydrase activity (hydration of CO(2) to carbonate). The sequence is that of Carbon disulfide hydrolase from Saccharolobus solfataricus (strain ATCC 35092 / DSM 1617 / JCM 11322 / P2) (Sulfolobus solfataricus).